The chain runs to 486 residues: Glutamyl-tRNA(Gln) amidotransferase subunit A (486 aa).

Catalysis depends on charge relay system residues K74 and S149. S173 (acyl-ester intermediate) is an active-site residue.

This sequence belongs to the amidase family. GatA subfamily. As to quaternary structure, heterotrimer of A, B and C subunits.

The catalysed reaction is L-glutamyl-tRNA(Gln) + L-glutamine + ATP + H2O = L-glutaminyl-tRNA(Gln) + L-glutamate + ADP + phosphate + H(+). Allows the formation of correctly charged Gln-tRNA(Gln) through the transamidation of misacylated Glu-tRNA(Gln) in organisms which lack glutaminyl-tRNA synthetase. The reaction takes place in the presence of glutamine and ATP through an activated gamma-phospho-Glu-tRNA(Gln). This is Glutamyl-tRNA(Gln) amidotransferase subunit A from Prochlorococcus marinus (strain MIT 9303).